Reading from the N-terminus, the 104-residue chain is Ig lambda-2 chain C region (104 aa).

The Ig-like domain maps to 6-99; sequence PTLTVFPPST…EGNTVEKSLS (94 aa). A disulfide bridge connects residues Cys27 and Cys85.

In Rattus norvegicus (Rat), this protein is Ig lambda-2 chain C region.